The sequence spans 144 residues: 3-hydroxyacyl-[acyl-carrier-protein] dehydratase FabZ (144 aa).

The active site involves His48.

The protein belongs to the thioester dehydratase family. FabZ subfamily.

It localises to the cytoplasm. It carries out the reaction a (3R)-hydroxyacyl-[ACP] = a (2E)-enoyl-[ACP] + H2O. Its function is as follows. Involved in unsaturated fatty acids biosynthesis. Catalyzes the dehydration of short chain beta-hydroxyacyl-ACPs and long chain saturated and unsaturated beta-hydroxyacyl-ACPs. This Bacillus cytotoxicus (strain DSM 22905 / CIP 110041 / 391-98 / NVH 391-98) protein is 3-hydroxyacyl-[acyl-carrier-protein] dehydratase FabZ.